The chain runs to 260 residues: Indole-3-glycerol phosphate synthase (260 aa).

It belongs to the TrpC family.

It catalyses the reaction 1-(2-carboxyphenylamino)-1-deoxy-D-ribulose 5-phosphate + H(+) = (1S,2R)-1-C-(indol-3-yl)glycerol 3-phosphate + CO2 + H2O. The protein operates within amino-acid biosynthesis; L-tryptophan biosynthesis; L-tryptophan from chorismate: step 4/5. This is Indole-3-glycerol phosphate synthase from Staphylococcus haemolyticus (strain JCSC1435).